The primary structure comprises 443 residues: MNKFRNFPPINTLINDENLANYPLYLRAHFAKIIVSNCKKELSKDENLNFSLQDLLKKITQSIDEFLNAQSQSLINATGVIIHTNLGRSIIDESIFERTKEIICSYSNLEFNMQSGKRGSRYDALSANLKILFDCEDCLVVNNNASAVFLILNTLAKNEEVITSRSELVEIGGNFRIPEVMLAAGVRLKEIGTTNKTHLYDYEKAINENTKMILKTHRSNFAFKGFFEEVSLSEIHTLTKKKKIISYYDLGSGWCEKINKQLSKNEPSVKELLKHCDILSFSGDKLFGSTQAGIILGKKKYIQQLKKNQLLRMLRVDKITLAFLNETTKAYLEKEYEKIPTLKLLNDNLKTIEKKALFIKEKIPIKCELKASKSLVGGGSMPDKSLDTFVLSFDEKALLLQEKFRKKGVIGRVENGHFVLDFRSILEKDLNRLIHAIKEVFHA.

Residue lysine 285 is modified to N6-(pyridoxal phosphate)lysine.

The protein belongs to the SelA family. Pyridoxal 5'-phosphate is required as a cofactor.

The protein resides in the cytoplasm. It catalyses the reaction L-seryl-tRNA(Sec) + selenophosphate + H(+) = L-selenocysteinyl-tRNA(Sec) + phosphate. It participates in aminoacyl-tRNA biosynthesis; selenocysteinyl-tRNA(Sec) biosynthesis; selenocysteinyl-tRNA(Sec) from L-seryl-tRNA(Sec) (bacterial route): step 1/1. Converts seryl-tRNA(Sec) to selenocysteinyl-tRNA(Sec) required for selenoprotein biosynthesis. The protein is L-seryl-tRNA(Sec) selenium transferase of Campylobacter lari (strain RM2100 / D67 / ATCC BAA-1060).